Here is a 440-residue protein sequence, read N- to C-terminus: Transposon Ty1-PR3 Gag polyprotein (440 aa).

Polar residues-rich tracts occupy residues 1–23 (MESQ…SVTS), 48–60 (TKAN…TPAS), and 127–152 (QSQF…GNTF). Disordered regions lie at residues 1–93 (MESQ…MMTQ), 126–173 (PQSQ…RPPP), and 352–440 (GSRN…PGTY). Over residues 153 to 165 (TDSSSADSDMTST) the composition is skewed to low complexity. Residues 299–401 (NNGIHINNKV…NSKSKTARAH (103 aa)) form an RNA-binding region. Low complexity predominate over residues 402 to 418 (NVSTSNNSPSTDNDSIS). Residue serine 416 is modified to Phosphoserine. Residues 419–428 (KSTTEPIQLN) show a composition bias toward polar residues. The segment covering 429–440 (NKHDLHLRPGTY) has biased composition (basic and acidic residues).

Homotrimer.

Its subcellular location is the cytoplasm. Functionally, capsid protein (CA) is the structural component of the virus-like particle (VLP), forming the shell that encapsulates the retrotransposons dimeric RNA genome. The particles are assembled from trimer-clustered units and there are holes in the capsid shells that allow for the diffusion of macromolecules. CA also has nucleocapsid-like chaperone activity, promoting primer tRNA(i)-Met annealing to the multipartite primer-binding site (PBS), dimerization of Ty1 RNA and initiation of reverse transcription. The protein is Transposon Ty1-PR3 Gag polyprotein (TY1A-PR3) of Saccharomyces cerevisiae (strain ATCC 204508 / S288c) (Baker's yeast).